The chain runs to 701 residues: Glycine--tRNA ligase beta subunit (701 aa).

It belongs to the class-II aminoacyl-tRNA synthetase family. As to quaternary structure, tetramer of two alpha and two beta subunits.

It is found in the cytoplasm. It carries out the reaction tRNA(Gly) + glycine + ATP = glycyl-tRNA(Gly) + AMP + diphosphate. In Bradyrhizobium sp. (strain BTAi1 / ATCC BAA-1182), this protein is Glycine--tRNA ligase beta subunit.